A 542-amino-acid chain; its full sequence is Cytochrome P450 monooxygenase TRI1 (542 aa).

Residues 37 to 54 (LIYFLCFVVLGRAVQWFL) traverse the membrane as a helical segment. N-linked (GlcNAc...) asparagine glycans are attached at residues Asn167, Asn297, and Asn428. Cys469 lines the heme pocket.

The protein belongs to the cytochrome P450 family. The cofactor is heme.

Its subcellular location is the membrane. It participates in sesquiterpene biosynthesis; trichothecene biosynthesis. Its function is as follows. Cytochrome P450 monooxygenase; part of 2-gene cluster involved in trichothecene C-8 modification that mediates the biosynthesis of T2-toxin. The biosynthesis of trichothecenes begins with the cyclization of farnesyl diphosphate to trichodiene and is catalyzed by the trichodiene synthase TRI5. Trichodiene undergoes a series of oxygenations catalyzed by the cytochrome P450 monooxygenase TRI4. TRI4 controls the addition of four oxygens at C-2, C-3, C-11, and the C-12, C-13-epoxide to form the intermediate isotrichotriol. Isotrichotriol then undergoes a non-enzymatic isomerization and cyclization to form isotrichodermol. During this process, the oxygen at the C-2 position becomes the pyran ring oxygen and the hydroxyl group at C-11 is lost. More complex type A trichothecenes are built by modifying isotrichodermol through a series of paired hydroxylation and acetylation or acylation steps. Isotrichodermol is converted to isotrichodermin by the acetyltransferase TRI101. TRI101 encodes a C-3 transacetylase that acts as a self-protection or resistance factor during biosynthesis and that the presence of a free C-3 hydroxyl group is a key component of Fusarium trichothecene phytotoxicity. A second hydroxyl group is added to C-15 by the trichothecene C-15 hydroxylase TRI11, producing 15-decalonectrin, which is then acetylated by TRI3, producing calonectrin. A third hydroxyl group is added at C-4 by the cytochrome P450 monooxygenase TRI13, converting calonectrin to 3,15-diacetoxyspirpenol, which is subsequently acetylated by the acetyltransferase TRI7. A fourth hydroxyl group is added to C-8 by the cytochrome P450 monooxygenase TRI1, followed by the addition of an isovaleryl moiety by TRI16. Finally, the acetyl group is removed from the C-3 position by the trichothecene C-3 esterase TRI8 to produce T-2 toxin. This is Cytochrome P450 monooxygenase TRI1 from Fusarium sporotrichioides.